A 400-amino-acid chain; its full sequence is Phosphoglycerate kinase (400 aa).

Residues 21-23, Arg36, 59-62, Arg119, and Arg160 contribute to the substrate site; these read DFN and HLGR. ATP-binding positions include Lys211, Glu329, and 356-359; that span reads GGDS.

The protein belongs to the phosphoglycerate kinase family. As to quaternary structure, monomer.

Its subcellular location is the cytoplasm. It carries out the reaction (2R)-3-phosphoglycerate + ATP = (2R)-3-phospho-glyceroyl phosphate + ADP. The protein operates within carbohydrate degradation; glycolysis; pyruvate from D-glyceraldehyde 3-phosphate: step 2/5. This Lactiplantibacillus plantarum (strain ATCC BAA-793 / NCIMB 8826 / WCFS1) (Lactobacillus plantarum) protein is Phosphoglycerate kinase.